Consider the following 469-residue polypeptide: 3-isopropylmalate dehydratase large subunit (469 aa).

The [4Fe-4S] cluster site is built by Cys-350, Cys-410, and Cys-413.

It belongs to the aconitase/IPM isomerase family. LeuC type 1 subfamily. Heterodimer of LeuC and LeuD. It depends on [4Fe-4S] cluster as a cofactor.

The enzyme catalyses (2R,3S)-3-isopropylmalate = (2S)-2-isopropylmalate. Its pathway is amino-acid biosynthesis; L-leucine biosynthesis; L-leucine from 3-methyl-2-oxobutanoate: step 2/4. Catalyzes the isomerization between 2-isopropylmalate and 3-isopropylmalate, via the formation of 2-isopropylmaleate. The polypeptide is 3-isopropylmalate dehydratase large subunit (Rhizobium meliloti (strain 1021) (Ensifer meliloti)).